We begin with the raw amino-acid sequence, 421 residues long: Testin (421 aa).

In terms of domain architecture, PET spans 92–199 (MILTNPVAAK…GDVKLPREMD (108 aa)). The disordered stretch occupies residues 133–164 (EKQPVAGSEGAQYRKKQLAKQLPAHDQDPSKC). The span at 155–164 (PAHDQDPSKC) shows a compositional bias: basic and acidic residues. LIM zinc-binding domains are found at residues 234 to 297 (YSCY…CDSE), 299 to 359 (PRCA…NHAV), and 362 to 421 (QGCH…KMMS).

This sequence belongs to the prickle / espinas / testin family. In terms of assembly, interacts via LIM domain 1 with ZYX. Interacts (via LIM domain 3) with ENAH and VASP. Interacts with ALKBH4, talin, actin, alpha-actinin, GRIP1 and PXN. Interacts (via LIM domain 2) with ACTL7A (via N-terminus). Heterodimer with ACTL7A; the heterodimer interacts with ENAH to form a heterotrimer.

It localises to the cytoplasm. The protein resides in the cell junction. Its subcellular location is the focal adhesion. Scaffold protein that may play a role in cell adhesion, cell spreading and in the reorganization of the actin cytoskeleton. Plays a role in the regulation of cell proliferation. May act as a tumor suppressor. The chain is Testin (TES) from Mustela putorius furo (European domestic ferret).